A 257-amino-acid chain; its full sequence is Thiazole synthase (257 aa).

The active-site Schiff-base intermediate with DXP is the Lys-100. 1-deoxy-D-xylulose 5-phosphate is bound by residues Gly-161, Ala-187–Gly-188, and Asn-209–Thr-210.

Belongs to the ThiG family. Homotetramer. Forms heterodimers with either ThiH or ThiS.

The protein resides in the cytoplasm. The enzyme catalyses [ThiS sulfur-carrier protein]-C-terminal-Gly-aminoethanethioate + 2-iminoacetate + 1-deoxy-D-xylulose 5-phosphate = [ThiS sulfur-carrier protein]-C-terminal Gly-Gly + 2-[(2R,5Z)-2-carboxy-4-methylthiazol-5(2H)-ylidene]ethyl phosphate + 2 H2O + H(+). It participates in cofactor biosynthesis; thiamine diphosphate biosynthesis. Functionally, catalyzes the rearrangement of 1-deoxy-D-xylulose 5-phosphate (DXP) to produce the thiazole phosphate moiety of thiamine. Sulfur is provided by the thiocarboxylate moiety of the carrier protein ThiS. In vitro, sulfur can be provided by H(2)S. The polypeptide is Thiazole synthase (Zymomonas mobilis subsp. mobilis (strain ATCC 31821 / ZM4 / CP4)).